Reading from the N-terminus, the 147-residue chain is Hemoglobin subunit beta (147 aa).

Val-2 carries the N-acetylvaline modification. The region spanning His-3–His-147 is the Globin domain. Thr-13 carries the phosphothreonine modification. Ser-45 carries the phosphoserine modification. Lys-60 bears the N6-acetyllysine mark. His-64 provides a ligand contact to heme b. Position 83 is an N6-acetyllysine (Lys-83). His-93 lines the heme b pocket. Cys-94 carries the post-translational modification S-nitrosocysteine. N6-acetyllysine is present on Lys-145.

Belongs to the globin family. Heterotetramer of two alpha chains and two beta chains. In terms of tissue distribution, red blood cells.

Involved in oxygen transport from the lung to the various peripheral tissues. This chain is Hemoglobin subunit beta (HBB), found in Scalopus aquaticus (Eastern mole).